A 429-amino-acid polypeptide reads, in one-letter code: Serine--tRNA ligase (429 aa).

L-serine is bound at residue 235 to 237 (TAE). 266–268 (RSE) is a binding site for ATP. Glutamate 289 contributes to the L-serine binding site. An ATP-binding site is contributed by 353–356 (EISS). Serine 389 serves as a coordination point for L-serine.

Belongs to the class-II aminoacyl-tRNA synthetase family. Type-1 seryl-tRNA synthetase subfamily. As to quaternary structure, homodimer. The tRNA molecule binds across the dimer.

It is found in the cytoplasm. It carries out the reaction tRNA(Ser) + L-serine + ATP = L-seryl-tRNA(Ser) + AMP + diphosphate + H(+). It catalyses the reaction tRNA(Sec) + L-serine + ATP = L-seryl-tRNA(Sec) + AMP + diphosphate + H(+). The protein operates within aminoacyl-tRNA biosynthesis; selenocysteinyl-tRNA(Sec) biosynthesis; L-seryl-tRNA(Sec) from L-serine and tRNA(Sec): step 1/1. Its function is as follows. Catalyzes the attachment of serine to tRNA(Ser). Is also able to aminoacylate tRNA(Sec) with serine, to form the misacylated tRNA L-seryl-tRNA(Sec), which will be further converted into selenocysteinyl-tRNA(Sec). The chain is Serine--tRNA ligase from Actinobacillus succinogenes (strain ATCC 55618 / DSM 22257 / CCUG 43843 / 130Z).